The chain runs to 161 residues: SsrA-binding protein (161 aa).

Belongs to the SmpB family.

The protein resides in the cytoplasm. Required for rescue of stalled ribosomes mediated by trans-translation. Binds to transfer-messenger RNA (tmRNA), required for stable association of tmRNA with ribosomes. tmRNA and SmpB together mimic tRNA shape, replacing the anticodon stem-loop with SmpB. tmRNA is encoded by the ssrA gene; the 2 termini fold to resemble tRNA(Ala) and it encodes a 'tag peptide', a short internal open reading frame. During trans-translation Ala-aminoacylated tmRNA acts like a tRNA, entering the A-site of stalled ribosomes, displacing the stalled mRNA. The ribosome then switches to translate the ORF on the tmRNA; the nascent peptide is terminated with the 'tag peptide' encoded by the tmRNA and targeted for degradation. The ribosome is freed to recommence translation, which seems to be the essential function of trans-translation. The protein is SsrA-binding protein of Mycolicibacterium smegmatis (strain ATCC 700084 / mc(2)155) (Mycobacterium smegmatis).